We begin with the raw amino-acid sequence, 458 residues long: Cysteine protease ATG4C (458 aa).

N-acetylmethionine is present on Met-1. Catalysis depends on Cys-111, which acts as the Nucleophile. Residues Asp-345 and His-347 contribute to the active site. Ser-451 is subject to Phosphoserine. Thr-452 bears the Phosphothreonine mark.

The protein belongs to the peptidase C54 family.

The protein resides in the cytoplasm. It carries out the reaction [protein]-C-terminal L-amino acid-glycyl-phosphatidylethanolamide + H2O = [protein]-C-terminal L-amino acid-glycine + a 1,2-diacyl-sn-glycero-3-phosphoethanolamine. With respect to regulation, inhibited by N-ethylmaleimide. Functionally, cysteine protease that plays a key role in autophagy by mediating both proteolytic activation and delipidation of ATG8 family proteins. The protease activity is required for proteolytic activation of ATG8 family proteins: cleaves the C-terminal amino acid of ATG8 proteins MAP1LC3 and GABARAPL2, to reveal a C-terminal glycine. Exposure of the glycine at the C-terminus is essential for ATG8 proteins conjugation to phosphatidylethanolamine (PE) and insertion to membranes, which is necessary for autophagy. In addition to the protease activity, also mediates delipidation of ATG8 family proteins. Catalyzes delipidation of PE-conjugated forms of ATG8 proteins during macroautophagy. Compared to ATG4B, the major protein for proteolytic activation of ATG8 proteins, shows weaker ability to cleave the C-terminal amino acid of ATG8 proteins, while it displays stronger delipidation activity. In contrast to other members of the family, weakly or not involved in phagophore growth during mitophagy. The polypeptide is Cysteine protease ATG4C (Homo sapiens (Human)).